The sequence spans 581 residues: Laccase-1 (581 aa).

The N-terminal stretch at 1 to 25 (MENLGFLIISTFLLLFTTLLPYSSA) is a signal peptide. Plastocyanin-like domains are found at residues 34–150 (NVEW…PRQP) and 161–312 (EIPI…YTGK). N80 carries N-linked (GlcNAc...) asparagine glycosylation. The Cu cation site is built by H84, H86, H129, and H131. N241, N300, N386, and N403 each carry an N-linked (GlcNAc...) asparagine glycan. Residues 429–565 (DFPEKPPNRF…AMGFIVKDGP (137 aa)) form the Plastocyanin-like 3 domain. Residues H482, H485, H487, H544, C545, H546, and H550 each contribute to the Cu cation site.

The protein belongs to the multicopper oxidase family. Cu cation is required as a cofactor. As to expression, expressed in roots, stems and flowers.

The protein localises to the secreted. Its subcellular location is the extracellular space. The protein resides in the apoplast. The enzyme catalyses 4 hydroquinone + O2 = 4 benzosemiquinone + 2 H2O. Lignin degradation and detoxification of lignin-derived products. The chain is Laccase-1 (LAC1) from Arabidopsis thaliana (Mouse-ear cress).